Here is a 275-residue protein sequence, read N- to C-terminus: Large ribosomal subunit protein uL2 (275 aa).

The disordered stretch occupies residues 223–260 (VAMNPVDHPHGGGEGRTSGGRHPVSPWGLPTKGYKTRS).

This sequence belongs to the universal ribosomal protein uL2 family. Part of the 50S ribosomal subunit. Forms a bridge to the 30S subunit in the 70S ribosome.

In terms of biological role, one of the primary rRNA binding proteins. Required for association of the 30S and 50S subunits to form the 70S ribosome, for tRNA binding and peptide bond formation. It has been suggested to have peptidyltransferase activity; this is somewhat controversial. Makes several contacts with the 16S rRNA in the 70S ribosome. This is Large ribosomal subunit protein uL2 from Legionella pneumophila (strain Paris).